The primary structure comprises 426 residues: Serine--tRNA ligase (426 aa).

L-serine is bound at residue Thr229–Glu231. ATP is bound at residue Arg260–Glu262. Glu283 serves as a coordination point for L-serine. Residue Glu347–Ser350 participates in ATP binding. Ser383 contacts L-serine.

It belongs to the class-II aminoacyl-tRNA synthetase family. Type-1 seryl-tRNA synthetase subfamily. In terms of assembly, homodimer. The tRNA molecule binds across the dimer.

Its subcellular location is the cytoplasm. It catalyses the reaction tRNA(Ser) + L-serine + ATP = L-seryl-tRNA(Ser) + AMP + diphosphate + H(+). The catalysed reaction is tRNA(Sec) + L-serine + ATP = L-seryl-tRNA(Sec) + AMP + diphosphate + H(+). It functions in the pathway aminoacyl-tRNA biosynthesis; selenocysteinyl-tRNA(Sec) biosynthesis; L-seryl-tRNA(Sec) from L-serine and tRNA(Sec): step 1/1. In terms of biological role, catalyzes the attachment of serine to tRNA(Ser). Is also able to aminoacylate tRNA(Sec) with serine, to form the misacylated tRNA L-seryl-tRNA(Sec), which will be further converted into selenocysteinyl-tRNA(Sec). This chain is Serine--tRNA ligase, found in Rickettsia bellii (strain RML369-C).